The following is an 865-amino-acid chain: MQNGANSRSQEYQGVSVDSRYDPQAIETKWQQSWAAAQLDRTPEADDRPKFYALSMFPYPSGNLHMGHVRNYTITDAIARVKRRQGFRVLHPMGWDAFGLPAENAAIDRGVQPADWTYQNVAQMREQLKQLGLSYDWDREVTTCSPDYYRWTQWLFLQFFEAGLAYQKEATVNWDPIDQTVLANEQVDSEGRSWRSGAKVERRQLKQWFLKITDYAEELLQDLDQLTGWPERVRLMQANWIGKSTGAYLEFPIVNSSDRVKVFTTRPDTVYGVSYVVLAPEHPLVTQVTTPEQQTAVAAFAAEVSQTSELERTAEDRPKRGVPTGGFVTNPFTGQAVPIWIADYVLVEYGTGAVMGVPAHDSRDFAFAQRYGLPVQPVIQPTEGAIAEPWPAPFTEAGVMVNSGQFDGLSSTEAKAKIIAFAEEQGWGQAHVQYRLRDWLISRQRYWGCPIPIVHCPDCGPVAAADLPVQLPDSVQFSGRGPSPLAQLEDWVTTTCPSCGKPARRETDTMDTFMCSSWYYLRYSDASNPEIAFTKDKVNDWLPVDQYVGGIEHAILHLLYSRFFTKVLRDRGLLSFDEPFKRLLTQGMVQGLTYKNPKTGKYVPSDRISDPSQPVDPDTGDRLEVFFEKMSKSKYNGVDPARVLDRYGADTARMFILFKAPPEKDLEWDDADVEGQFRFLNRVWRLVQTASQVEATTAADDKAEKDLRRAVHTAIQAVTEDLEEDYQLNTAIAELMKLTNALNDAPMPGSPAYLEGVQTLVLLLAPFAPHIAEELWQQLGGERSVHLEGWPVLDESALIVDEIPLVIQIMGKTRGTITVPASADRDQLQQLAENSEIAQRWLDGQTIRKVIVVPGKLVNFVIASP.

Positions 58–68 (PYPSGNLHMGH) match the 'HIGH' region motif. Residues 629–633 (KMSKS) carry the 'KMSKS' region motif. Lys-632 provides a ligand contact to ATP.

Belongs to the class-I aminoacyl-tRNA synthetase family.

The protein localises to the cytoplasm. The enzyme catalyses tRNA(Leu) + L-leucine + ATP = L-leucyl-tRNA(Leu) + AMP + diphosphate. The polypeptide is Leucine--tRNA ligase (Synechococcus elongatus (strain ATCC 33912 / PCC 7942 / FACHB-805) (Anacystis nidulans R2)).